Here is a 315-residue protein sequence, read N- to C-terminus: 4-hydroxy-3-methylbut-2-enyl diphosphate reductase (315 aa).

C12 contacts [4Fe-4S] cluster. 2 residues coordinate (2E)-4-hydroxy-3-methylbut-2-enyl diphosphate: H41 and H74. H41 and H74 together coordinate dimethylallyl diphosphate. 2 residues coordinate isopentenyl diphosphate: H41 and H74. [4Fe-4S] cluster is bound at residue C96. (2E)-4-hydroxy-3-methylbut-2-enyl diphosphate is bound at residue H124. H124 serves as a coordination point for dimethylallyl diphosphate. H124 is a binding site for isopentenyl diphosphate. Residue E126 is the Proton donor of the active site. Residue T168 coordinates (2E)-4-hydroxy-3-methylbut-2-enyl diphosphate. Position 198 (C198) interacts with [4Fe-4S] cluster. Residues S226, S227, N228, and S270 each contribute to the (2E)-4-hydroxy-3-methylbut-2-enyl diphosphate site. Residues S226, S227, N228, and S270 each coordinate dimethylallyl diphosphate. Isopentenyl diphosphate-binding residues include S226, S227, N228, and S270.

The protein belongs to the IspH family. [4Fe-4S] cluster is required as a cofactor.

The catalysed reaction is isopentenyl diphosphate + 2 oxidized [2Fe-2S]-[ferredoxin] + H2O = (2E)-4-hydroxy-3-methylbut-2-enyl diphosphate + 2 reduced [2Fe-2S]-[ferredoxin] + 2 H(+). It carries out the reaction dimethylallyl diphosphate + 2 oxidized [2Fe-2S]-[ferredoxin] + H2O = (2E)-4-hydroxy-3-methylbut-2-enyl diphosphate + 2 reduced [2Fe-2S]-[ferredoxin] + 2 H(+). It participates in isoprenoid biosynthesis; dimethylallyl diphosphate biosynthesis; dimethylallyl diphosphate from (2E)-4-hydroxy-3-methylbutenyl diphosphate: step 1/1. It functions in the pathway isoprenoid biosynthesis; isopentenyl diphosphate biosynthesis via DXP pathway; isopentenyl diphosphate from 1-deoxy-D-xylulose 5-phosphate: step 6/6. Functionally, catalyzes the conversion of 1-hydroxy-2-methyl-2-(E)-butenyl 4-diphosphate (HMBPP) into a mixture of isopentenyl diphosphate (IPP) and dimethylallyl diphosphate (DMAPP). Acts in the terminal step of the DOXP/MEP pathway for isoprenoid precursor biosynthesis. The chain is 4-hydroxy-3-methylbut-2-enyl diphosphate reductase from Pseudomonas putida (strain GB-1).